A 122-amino-acid chain; its full sequence is Large ribosomal subunit protein uL14 (122 aa).

It belongs to the universal ribosomal protein uL14 family. In terms of assembly, part of the 50S ribosomal subunit. Forms a cluster with proteins L3 and L19. In the 70S ribosome, L14 and L19 interact and together make contacts with the 16S rRNA in bridges B5 and B8.

Binds to 23S rRNA. Forms part of two intersubunit bridges in the 70S ribosome. The chain is Large ribosomal subunit protein uL14 from Ruegeria pomeroyi (strain ATCC 700808 / DSM 15171 / DSS-3) (Silicibacter pomeroyi).